The primary structure comprises 135 residues: Translation initiation factor 2 subunit beta (135 aa).

This sequence belongs to the eIF-2-beta/eIF-5 family. In terms of assembly, heterotrimer composed of an alpha, a beta and a gamma chain.

Its function is as follows. eIF-2 functions in the early steps of protein synthesis by forming a ternary complex with GTP and initiator tRNA. The protein is Translation initiation factor 2 subunit beta (eif2b) of Methanothermobacter thermautotrophicus (strain ATCC 29096 / DSM 1053 / JCM 10044 / NBRC 100330 / Delta H) (Methanobacterium thermoautotrophicum).